Consider the following 573-residue polypeptide: Transcription factor E3 (573 aa).

Ser47 is modified (phosphoserine; by MTOR). The tract at residues 91–151 (TLSASSSAEG…SPAPASPAIS (61 aa)) is disordered. Positions 107-126 (SSSSSSRVLLRQQLMRAQAQ) are enriched in low complexity. A compositionally biased stretch (basic and acidic residues) spans 127 to 136 (EQERRERREQ). Positions 137–151 (ASSFPSPAPASPAIS) are enriched in low complexity. Arg186 is modified (asymmetric dimethylarginine). The disordered stretch occupies residues 209-248 (LASQALTPPPGGASVQPLPTPEAAHAPGPTSSAPNSPMAL). Residues 258 to 269 (EIDDVIDEIISL) form a strong transcription activation domain region. At Ser319 the chain carries Phosphoserine; by MTOR. Lys337 participates in a covalent cross-link: Glycyl lysine isopeptide (Lys-Gly) (interchain with G-Cter in SUMO2). A bHLH domain is found at 344-397 (QKKDNHNLIERRRRFNINDRIKELGTLIPKSSDPEMRWNKGTILKASVDYIRKL). A Nuclear localization signal motif is present at residues 354-357 (RRRR). The tract at residues 407–428 (LESRQRSLEQANRSLQLRIQEL) is leucine-zipper. Positions 531 to 573 (VGGLSGGTLSPLRAASDPLLSSVSPAVSKASSRRSSFSMEEES) are disordered. The span at 537-573 (GTLSPLRAASDPLLSSVSPAVSKASSRRSSFSMEEES) shows a compositional bias: low complexity. Phosphoserine is present on residues Ser540, Ser546, Ser552, Ser554, Ser558, and Ser566.

The protein belongs to the MiT/TFE family. As to quaternary structure, homodimer and heterodimer; with TFEB or MITF. Interacts with RRAGC/RagC GDP-bound and RRAGD/RagD GDP-bound; promoting its recruitment to lysosomal membrane in the presence of nutrients. In terms of processing, phosphorylation ar Ser-47 and Ser-319 by MTOR via non-canonical mTORC1 pathway regulates its stability and subcellular location, respectively. When nutrients are present, phosphorylation by MTOR at Ser-47 promotes ubiquitination by the SCF(BTRC) complex, followed by degradation. When nutrients are present, phosphorylation by MTOR at Ser-319 also promotes association with 14-3-3/YWHA adapters and retention in the cytosol. Phosphorylation at Ser-47 plays a more critical role than phosphorylation at Ser-319 for TFE3 inactivation. Inhibition of mTORC1, starvation and lysosomal disruption, promotes dephosphorylation and transcription factor activity. Ubiquitinated by the SCF(BTRC) and SCF(FBXW11) complexes following phosphorylation at Ser-47 by MTOR, leading to its degradation by the proteasome. Post-translationally, sumoylated; does not affect dimerization with MITF.

It localises to the cytoplasm. It is found in the cytosol. The protein localises to the nucleus. The protein resides in the lysosome membrane. In terms of biological role, transcription factor that acts as a master regulator of lysosomal biogenesis and immune response. Specifically recognizes and binds E-box sequences (5'-CANNTG-3'); efficient DNA-binding requires dimerization with itself or with another MiT/TFE family member such as TFEB or MITF. Involved in the cellular response to amino acid availability by acting downstream of MTOR: in the presence of nutrients, TFE3 phosphorylation by MTOR promotes its inactivation. Upon starvation or lysosomal stress, inhibition of MTOR induces TFE3 dephosphorylation, resulting in transcription factor activity. Specifically recognizes and binds the CLEAR-box sequence (5'-GTCACGTGAC-3') present in the regulatory region of many lysosomal genes, leading to activate their expression, thereby playing a central role in expression of lysosomal genes. Maintains the pluripotent state of embryonic stem cells by promoting the expression of genes such as ESRRB; mTOR-dependent TFE3 cytosolic retention and inactivation promotes exit from pluripotency. Required to maintain the naive pluripotent state of hematopoietic stem cell; mTOR-dependent cytoplasmic retention of TFE3 promotes the exit of hematopoietic stem cell from pluripotency. TFE3 activity is also involved in the inhibition of neuronal progenitor differentiation. Acts as a positive regulator of browning of adipose tissue by promoting expression of target genes; mTOR-dependent phosphorylation promotes cytoplasmic retention of TFE3 and inhibits browning of adipose tissue. In association with TFEB, activates the expression of CD40L in T-cells, thereby playing a role in T-cell-dependent antibody responses in activated CD4(+) T-cells and thymus-dependent humoral immunity. Specifically recognizes the MUE3 box, a subset of E-boxes, present in the immunoglobulin enhancer. It also binds very well to a USF/MLTF site. May regulate lysosomal positioning in response to nutrient deprivation by promoting the expression of PIP4P1. This Bos taurus (Bovine) protein is Transcription factor E3.